A 67-amino-acid polypeptide reads, in one-letter code: Epsilon-conotoxin TxVA (67 aa).

An N-terminal signal peptide occupies residues 1–19 (MRCFPVFIILLLLIASAPC). Positions 20-50 (FDARTKTDDDVPLSSLRDNLKRTIRTRLNIR) are excised as a propeptide. 4-carboxyglutamate is present on residues E51 and E54. Intrachain disulfides connect C52–C58 and C53–C59. The residue at position 57 (W57) is a 6'-bromotryptophan. O-linked (GalNAc...) threonine glycosylation is present at T60. Residue P63 is modified to 4-hydroxyproline. A propeptide spanning residues 64-67 (LTGR) is cleaved from the precursor.

Post-translationally, O-glycan consists of the disaccharide Gal-GalNAc. Expressed by the venom duct.

The protein resides in the secreted. Functionally, epsilon-conotoxins act at presynaptic membranes, blocking the calcium channels or G protein-coupled receptors. Causes hyperactivity upon intracranial injection into mice. Causes dorsal fins drooping in fish. The polypeptide is Epsilon-conotoxin TxVA (Conus textile (Cloth-of-gold cone)).